A 241-amino-acid polypeptide reads, in one-letter code: Cytochrome b6-f complex iron-sulfur subunit 2, cyanelle (241 aa).

The N-terminal 62 residues, 1–62 (MSAFACSAVA…AAKATTFSIS (62 aa)), are a transit peptide targeting the cyanelle. A helical membrane pass occupies residues 83–103 (LLGAIAGPTIGAGGPFVSFLV). The region spanning 127-223 (VEKWLETXKP…VNVLEDGVVA (97 aa)) is the Rieske domain. Residues Cys-169, His-171, Cys-187, and His-190 each contribute to the [2Fe-2S] cluster site. Cys-174 and Cys-189 are disulfide-bonded.

This sequence belongs to the Rieske iron-sulfur protein family. The 4 large subunits of the cytochrome b6-f complex are cytochrome b6, subunit IV (17 kDa polypeptide, petD), cytochrome f and the Rieske protein, while the 4 small subunits are petG, petL, petM and petN. The complex functions as a dimer. [2Fe-2S] cluster is required as a cofactor.

It localises to the plastid. Its subcellular location is the cyanelle thylakoid membrane. It catalyses the reaction 2 oxidized [plastocyanin] + a plastoquinol + 2 H(+)(in) = 2 reduced [plastocyanin] + a plastoquinone + 4 H(+)(out). Its function is as follows. Component of the cytochrome b6-f complex, which mediates electron transfer between photosystem II (PSII) and photosystem I (PSI), cyclic electron flow around PSI, and state transitions. In Cyanophora paradoxa, this protein is Cytochrome b6-f complex iron-sulfur subunit 2, cyanelle (petC-2).